A 163-amino-acid polypeptide reads, in one-letter code: MGKRNLDETMNESTVSEANGDATAPTTEKDEYQALCELVNPIAQPLANRKLAKKVYKLIKKASAGDKTLREGIKDVQKELRRNEKGICILAGNVSPIDVYSHIPGICEEKEIPYVYIPSREQLGLAVGHRRPSILIFVKPSGDFKELYDEVAEALRHLTVEAA.

The interval 1-27 (MGKRNLDETMNESTVSEANGDATAPTT) is disordered.

This sequence belongs to the eukaryotic ribosomal protein eL8 family. Component of the small nucleolar ribonucleoprotein particle containing H/ACA-type snoRNAs (H/ACA snoRNPs).

The protein localises to the nucleus. It localises to the nucleolus. Required for ribosome biogenesis. Part of a complex which catalyzes pseudouridylation of rRNA. This involves the isomerization of uridine such that the ribose is subsequently attached to C5, instead of the normal N1. Pseudouridine ('psi') residues may serve to stabilize the conformation of rRNAs. In Caenorhabditis elegans, this protein is Putative H/ACA ribonucleoprotein complex subunit 2-like protein.